Reading from the N-terminus, the 478-residue chain is Long-chain acyl-protein thioester reductase 2 (478 aa).

Belongs to the LuxC family.

It carries out the reaction a long-chain fatty aldehyde + NADP(+) + CoA = a long-chain fatty acyl-CoA + NADPH + H(+). Its pathway is lipid metabolism; fatty acid reduction for biolumincescence. Functionally, luxC is the fatty acid reductase enzyme responsible for synthesis of the aldehyde substrate for the luminescent reaction catalyzed by luciferase. This chain is Long-chain acyl-protein thioester reductase 2 (luxC), found in Photobacterium leiognathi.